The sequence spans 159 residues: 3-dehydroquinate dehydratase (159 aa).

Catalysis depends on Tyr-22, which acts as the Proton acceptor. Positions 73, 79, and 86 each coordinate substrate. His-99 functions as the Proton donor in the catalytic mechanism. Substrate is bound by residues 100–101 and Arg-110; that span reads IS.

This sequence belongs to the type-II 3-dehydroquinase family. In terms of assembly, homododecamer.

It catalyses the reaction 3-dehydroquinate = 3-dehydroshikimate + H2O. Its pathway is metabolic intermediate biosynthesis; chorismate biosynthesis; chorismate from D-erythrose 4-phosphate and phosphoenolpyruvate: step 3/7. In terms of biological role, catalyzes a trans-dehydration via an enolate intermediate. The chain is 3-dehydroquinate dehydratase from Campylobacter jejuni subsp. jejuni serotype O:6 (strain 81116 / NCTC 11828).